We begin with the raw amino-acid sequence, 478 residues long: Crt homolog 3 (478 aa).

A disordered region spans residues 1-30 (MGSDERKPLLSINDGDDDFNHQDVSTKTPP). The Cytoplasmic segment spans residues 1–52 (MGSDERKPLLSINDGDDDFNHQDVSTKTPPIKKESLSNKFKSFLKKSMTKET). The helical transmembrane segment at 53-73 (LPILIYVLLYIISGVINVVLL) threads the bilayer. Topologically, residues 74–83 (KKLMIKFVNY) are vacuolar. Residues 84 to 104 (GFFLSQITNYGYLPIFLVAMW) traverse the membrane as a helical segment. At 105–124 (YKMYCTSDVPKETRNFPQYK) the chain is on the cytoplasmic side. A helical membrane pass occupies residues 125–145 (FVIMGLLDAINGFFVVIGGVS). At 146–149 (TSGP) the chain is on the vacuolar side. The chain crosses the membrane as a helical span at residues 150 to 170 (LQQLLNQAIIPFTMIASFIFL). Residues 171 to 178 (RERYSLFQ) lie on the Cytoplasmic side of the membrane. A helical membrane pass occupies residues 179-199 (LGGAAVILGGVIVSLIPSLVG). Over 200–205 (GSSGGN) the chain is Vacuolar. The chain crosses the membrane as a helical span at residues 206-226 (ILFYNFFYLISVIPGALSNVY). The Cytoplasmic segment spans residues 227–237 (KDIAFQSIDMD). A helical transmembrane segment spans residues 238-258 (VWYLQFWDCLYQSLFGSILFP). Residues 259–322 (VNNWLPPPAT…FVCDDCHNTW (64 aa)) are Vacuolar-facing. Asn-296 is a glycosylation site (N-linked (GlcNAc...) asparagine). The helical transmembrane segment at 323–343 (IIVLIYMTVNIAYNIFILLVL) threads the bilayer. Residues 344-352 (KHAGATVYS) lie on the Cytoplasmic side of the membrane. The helical transmembrane segment at 353-373 (IANTVILPLTNIFFSIHFIMG) threads the bilayer. Residues 374–376 (AAT) are Vacuolar-facing. A helical transmembrane segment spans residues 377–397 (TPFSALSVAGLLLILFGLGGY). The Cytoplasmic portion of the chain corresponds to 398–478 (RIGSMIKKPP…RYRATNIINN (81 aa)). Residues 404–446 (KKPPPDSKKDSEQQGGEGGAGDGDSSDNKNNLGDSAEIPQQIQ) are disordered. Over residues 406–415 (PPPDSKKDSE) the composition is skewed to basic and acidic residues.

This sequence belongs to the CRT-like transporter family.

The protein resides in the vacuole membrane. In terms of biological role, nutrient transporter. Involved in maintaining the osmotic homeostasis of the digestive vacuole. This is Crt homolog 3 (crtp3) from Dictyostelium discoideum (Social amoeba).